Here is a 342-residue protein sequence, read N- to C-terminus: ATP synthase subunit a (342 aa).

Transmembrane regions (helical) follow at residues 11 to 31 (GLIK…AFAS), 109 to 129 (HVVT…IIGS), 170 to 190 (YLPY…LGLV), 199 to 219 (NINV…IAAL), 238 to 258 (ALWI…PVAL), 262 to 282 (LFAN…ISFI), 287 to 307 (IVAV…EIFV), and 308 to 328 (AFLQ…LASA).

The protein belongs to the ATPase A chain family. In terms of assembly, F-type ATPases have 2 components, CF(1) - the catalytic core - and CF(0) - the membrane proton channel. CF(1) has five subunits: alpha(3), beta(3), gamma(1), delta(1), epsilon(1). CF(0) has four main subunits: a, b, b' and c.

It localises to the cell inner membrane. Its function is as follows. Key component of the proton channel; it plays a direct role in the translocation of protons across the membrane. The polypeptide is ATP synthase subunit a (Chlorobium phaeobacteroides (strain DSM 266 / SMG 266 / 2430)).